The sequence spans 387 residues: Krueppel-like factor 17 (387 aa).

Disordered stretches follow at residues 28 to 54, 213 to 234, and 257 to 277; these read FLDMSSSPGSGGVHTSWNRGPSGIRRV, SRDPQDFAMPPAGSPSLLPLES, and RREAQNSRAQERASGRSSPVS. Positions 30–46 are enriched in polar residues; that stretch reads DMSSSPGSGGVHTSWNR. A compositionally biased stretch (basic and acidic residues) spans 257–270; it reads RREAQNSRAQERAS. 3 consecutive C2H2-type zinc fingers follow at residues 280–304, 310–334, and 340–362; these read YHCEYENCGKAYTKRSHLVSHQRKH, YKCTWEACTWSFFRSDELGRHTRIH, and HKCDQCGRQFMRSDHLRQHQRTH. The interval 357-387 is disordered; sequence QHQRTHMRMPRSPDPQADSGRRAGPLPAPHL.

The protein belongs to the Sp1 C2H2-type zinc-finger protein family.

The protein localises to the nucleus. Transcription repressor that binds to the promoter of target genes and prevents their expression. Acts as a negative regulator of epithelial-mesenchymal transition and metastasis in breast cancer. Specifically binds the 5'-CACCC-3' sequence in the promoter of ID1, a key metastasis regulator in breast cancer, and repress its expression. May be a germ cell-specific transcription factor that plays important roles in spermatid differentiation and oocyte development. This chain is Krueppel-like factor 17 (KLF17), found in Sus scrofa (Pig).